The primary structure comprises 493 residues: Glycerol kinase (493 aa).

Residue T11 coordinates ADP. Residues T11, T12, and S13 each contribute to the ATP site. T11 lines the sn-glycerol 3-phosphate pocket. R15 contributes to the ADP binding site. Residues R80, E81, Y132, and D241 each coordinate sn-glycerol 3-phosphate. Residues R80, E81, Y132, D241, and Q242 each coordinate glycerol. ADP-binding residues include T263 and G306. Residues T263, G306, Q310, and G408 each coordinate ATP. Residue G408 coordinates ADP.

It belongs to the FGGY kinase family.

The catalysed reaction is glycerol + ATP = sn-glycerol 3-phosphate + ADP + H(+). Its pathway is polyol metabolism; glycerol degradation via glycerol kinase pathway; sn-glycerol 3-phosphate from glycerol: step 1/1. Inhibited by fructose 1,6-bisphosphate (FBP). Functionally, key enzyme in the regulation of glycerol uptake and metabolism. Catalyzes the phosphorylation of glycerol to yield sn-glycerol 3-phosphate. The chain is Glycerol kinase from Cereibacter sphaeroides (strain ATCC 17023 / DSM 158 / JCM 6121 / CCUG 31486 / LMG 2827 / NBRC 12203 / NCIMB 8253 / ATH 2.4.1.) (Rhodobacter sphaeroides).